The primary structure comprises 313 residues: MNVSNAPRFNLLTILGPTASGKTRLAVNLARELGGEIISADSRQVFRRMDIGTGKDLHEYGEVHHHLIDILEPGEEFSVFAFQRLFLEAVGDICGRGRLPLLCGGTGMYLDAALRRYRMHEVPEDREWRASLEGVGDGELASRLREFRPGLHNSTDLVDRQRTIRALEIARFQADCAGDDEPFPDLRPLVIGIRWERAELRRRITERLRQRLESGMIEEVRRLNDGGVPWERLDYYGLEYRFVGMYLRDELSRNDLFQKLNSAIHDFAKRQETWFRRMERNGVAINWVDGGGGPLSEARRVILDNSYHLATGR.

16–23 (GPTASGKT) contributes to the ATP binding site. 18-23 (TASGKT) is a substrate binding site. Interaction with substrate tRNA stretches follow at residues 41-44 (DSRQ) and 161-165 (QRTIR).

This sequence belongs to the IPP transferase family. As to quaternary structure, monomer. The cofactor is Mg(2+).

The enzyme catalyses adenosine(37) in tRNA + dimethylallyl diphosphate = N(6)-dimethylallyladenosine(37) in tRNA + diphosphate. Its function is as follows. Catalyzes the transfer of a dimethylallyl group onto the adenine at position 37 in tRNAs that read codons beginning with uridine, leading to the formation of N6-(dimethylallyl)adenosine (i(6)A). In Pelobacter propionicus (strain DSM 2379 / NBRC 103807 / OttBd1), this protein is tRNA dimethylallyltransferase 2.